The primary structure comprises 239 residues: tRNA (guanine-N(1)-)-methyltransferase (239 aa).

S-adenosyl-L-methionine is bound by residues G108 and 127–132 (LGDFVL).

Belongs to the RNA methyltransferase TrmD family. Homodimer.

It is found in the cytoplasm. It carries out the reaction guanosine(37) in tRNA + S-adenosyl-L-methionine = N(1)-methylguanosine(37) in tRNA + S-adenosyl-L-homocysteine + H(+). In terms of biological role, specifically methylates guanosine-37 in various tRNAs. In Streptococcus pyogenes serotype M6 (strain ATCC BAA-946 / MGAS10394), this protein is tRNA (guanine-N(1)-)-methyltransferase.